The sequence spans 502 residues: Probable cytosol aminopeptidase (502 aa).

Lys-269 and Asp-274 together coordinate Mn(2+). Residue Lys-281 is part of the active site. Residues Asp-292, Asp-351, and Glu-353 each coordinate Mn(2+). The active site involves Arg-355.

This sequence belongs to the peptidase M17 family. The cofactor is Mn(2+).

The protein resides in the cytoplasm. The catalysed reaction is Release of an N-terminal amino acid, Xaa-|-Yaa-, in which Xaa is preferably Leu, but may be other amino acids including Pro although not Arg or Lys, and Yaa may be Pro. Amino acid amides and methyl esters are also readily hydrolyzed, but rates on arylamides are exceedingly low.. The enzyme catalyses Release of an N-terminal amino acid, preferentially leucine, but not glutamic or aspartic acids.. Functionally, presumably involved in the processing and regular turnover of intracellular proteins. Catalyzes the removal of unsubstituted N-terminal amino acids from various peptides. The chain is Probable cytosol aminopeptidase from Shewanella denitrificans (strain OS217 / ATCC BAA-1090 / DSM 15013).